The following is a 24-amino-acid chain: Metallothionein (24 aa).

Residues Cys3, Cys5, Cys8, Cys10, Cys17, Cys19, and Cys22 each contribute to the Cd(2+) site.

The protein belongs to the metallothionein superfamily. Type 8 family. In terms of processing, contains 4 disulfide bonds.

Its function is as follows. Metallothioneins have a high content of cysteine residues that bind various heavy metals. The polypeptide is Metallothionein (Neonectria lugdunensis (Aquatic fungus)).